The sequence spans 294 residues: Nucleotide-binding protein Adeh_0147 (294 aa).

17–24 contacts ATP; sequence GVSGSGKS. 68-71 contacts GTP; it reads DARE.

It belongs to the RapZ-like family.

Displays ATPase and GTPase activities. The polypeptide is Nucleotide-binding protein Adeh_0147 (Anaeromyxobacter dehalogenans (strain 2CP-C)).